The chain runs to 510 residues: Lysine--tRNA ligase (510 aa).

Residues Glu420 and Glu427 each coordinate Mg(2+).

This sequence belongs to the class-II aminoacyl-tRNA synthetase family. In terms of assembly, homodimer. It depends on Mg(2+) as a cofactor.

Its subcellular location is the cytoplasm. The enzyme catalyses tRNA(Lys) + L-lysine + ATP = L-lysyl-tRNA(Lys) + AMP + diphosphate. This Vibrio vulnificus (strain YJ016) protein is Lysine--tRNA ligase.